The sequence spans 316 residues: Olfactory receptor 5P79 (316 aa).

The Extracellular portion of the chain corresponds to 1 to 28 (MGILKDGNHTAVTEFILLGLTDDPVLKV). Residue N8 is glycosylated (N-linked (GlcNAc...) asparagine). The chain crosses the membrane as a helical span at residues 29–49 (VLFTIILCIYLVTVSGNLSTI). Residues 50-57 (LLIRVSSQ) are Cytoplasmic-facing. Residues 58–78 (LHHPMYFFLSHLASVDIGISS) form a helical membrane-spanning segment. At 79 to 102 (SVTPNMLVNFLLERSTISYLGCGI) the chain is on the extracellular side. C100 and C192 are disulfide-bonded. The chain crosses the membrane as a helical span at residues 103–123 (QLGSGAFFGSTESFLLAAMAY). Over 124 to 136 (DHFMAICNPLLYS) the chain is Cytoplasmic. Residues 137–157 (TKMSTQVCIQLLVGSYIGGFL) traverse the membrane as a helical segment. At 158-199 (NASSFILSFFSFLFCGPNKVNHFFCDFTPLVELSCSDNSVLL) the chain is on the extracellular side. Residues 200 to 220 (ILDSFSAGSIIVITVLVIAIS) form a helical membrane-spanning segment. Residues 221-240 (YTYILITILKMHSTEGRHKA) are Cytoplasmic-facing. A helical transmembrane segment spans residues 241–261 (FSTCTSHLTAVTVFYGTVTFI). Residues 262-274 (YVMPKSSYSTDQN) lie on the Extracellular side of the membrane. A helical transmembrane segment spans residues 275 to 297 (KVLSVFYMIAIAIPMLNPLIYSL). Over 298 to 316 (RNNEIKNALKRQLSKKTFS) the chain is Cytoplasmic.

The protein belongs to the G-protein coupled receptor 1 family.

The protein localises to the cell membrane. In terms of biological role, potential odorant receptor. The protein is Olfactory receptor 5P79 of Mus musculus (Mouse).